The primary structure comprises 296 residues: 4-hydroxybenzoate octaprenyltransferase (296 aa).

A run of 8 helical transmembrane segments spans residues 29-49, 55-75, 102-122, 146-166, 169-189, 219-239, 241-261, and 275-295; these read IGIYLLLWPTLWSLWIAADGV, LLIFVLGVILMRAAGCVINDF, AWITFAVLVALSFGLVLLTNA, YYPQVVLGAAYSWGILMAFTA, GELPASAWLLFLANVLWTVAY, LIIGSLQGLTLLLLALAGSRF, LGLYFYLGLAVAAACFVWEAW, and FLHNHWAGLAIFLGTVADYAL.

Belongs to the UbiA prenyltransferase family. The cofactor is Mg(2+).

Its subcellular location is the cell inner membrane. The enzyme catalyses all-trans-octaprenyl diphosphate + 4-hydroxybenzoate = 4-hydroxy-3-(all-trans-octaprenyl)benzoate + diphosphate. It participates in cofactor biosynthesis; ubiquinone biosynthesis. Catalyzes the prenylation of para-hydroxybenzoate (PHB) with an all-trans polyprenyl group. Mediates the second step in the final reaction sequence of ubiquinone-8 (UQ-8) biosynthesis, which is the condensation of the polyisoprenoid side chain with PHB, generating the first membrane-bound Q intermediate 3-octaprenyl-4-hydroxybenzoate. In Pseudomonas aeruginosa (strain UCBPP-PA14), this protein is 4-hydroxybenzoate octaprenyltransferase.